The sequence spans 367 residues: Alpha-2-HS-glycoprotein (367 aa).

The signal sequence occupies residues 1–18; that stretch reads MKSLVLLLCLAQLWGCHS. Positions 27 to 133 constitute a Cystatin fetuin-A-type 1 domain; that stretch reads YRQPNCDDPE…KFSVVYAKCD (107 aa). 6 disulfides stabilise this stretch: Cys32–Cys358, Cys89–Cys100, Cys114–Cys132, Cys146–Cys149, Cys208–Cys219, and Cys230–Cys247. Ser134, Ser135, and Ser138 each carry phosphoserine. The 112-residue stretch at 144-255 folds into the Cystatin fetuin-A-type 2 domain; that stretch reads KVCQDCPLLA…TCTVFQTQPV (112 aa). N-linked (GlcNAc...) asparagine glycans are attached at residues Asn156 and Asn176. The disordered stretch occupies residues 254 to 301; sequence PVTSQPQPEGANETVPTPVVDPDAPPSPPLGAPGLPPAGSPPDSHVLL. The N-linked (GlcNAc...) asparagine glycan is linked to Asn265. A compositionally biased stretch (pro residues) spans 276-293; that stretch reads DAPPSPPLGAPGLPPAGS. A propeptide spans 301 to 340 (connecting peptide); sequence LAAPPGHQLHWAHYDLRHTFMGVVSLGSPSGEASHPRKTR. Residue Thr319 is modified to Phosphothreonine. 3 positions are modified to phosphoserine: Ser325, Ser328, and Ser330. An O-linked (GalNAc...) threonine glycan is attached at Thr339.

Belongs to the fetuin family. Alpha-2-HS glycoprotein derives from this precursor, when the connecting peptide is cleaved off. The two chains A and B are held together by a single disulfide bond. Post-translationally, phosphorylated by FAM20C in the extracellular medium.

The protein localises to the secreted. Promotes endocytosis, possesses opsonic properties and influences the mineral phase of bone. Shows affinity for calcium and barium ions. The sequence is that of Alpha-2-HS-glycoprotein (AHSG) from Pan troglodytes (Chimpanzee).